Consider the following 737-residue polypeptide: Acetylcholinesterase (737 aa).

An N-terminal signal peptide occupies residues 1–38 (MEIRGLLMGRLRLGRRMVPLGLLGVTALLLILPPFALV). The segment at 141-168 (HSGATPRRRGLTRRESNSDANDNDPLVV) is disordered. Asn-220 carries an N-linked (GlcNAc...) asparagine glycan. Cys-228 and Cys-255 are oxidised to a cystine. Catalysis depends on Ser-360, which acts as the Acyl-ester intermediate. Cys-414 and Cys-427 are oxidised to a cystine. Active-site charge relay system residues include Glu-486 and His-600. Residues Cys-562 and Cys-683 are joined by a disulfide bond. The N-linked (GlcNAc...) asparagine glycan is linked to Asn-670.

It belongs to the type-B carboxylesterase/lipase family.

It localises to the synapse. The enzyme catalyses acetylcholine + H2O = choline + acetate + H(+). Functionally, rapidly hydrolyzes choline released into the synapse. The chain is Acetylcholinesterase (Ace) from Anopheles gambiae (African malaria mosquito).